The sequence spans 457 residues: Glutamyl-tRNA reductase (457 aa).

Residues 49–52 (TCNR), Ser109, 114–116 (ETQ), and Gln120 contribute to the substrate site. Cys50 (nucleophile) is an active-site residue. NADP(+) is bound at residue 189 to 194 (GAGKMG).

It belongs to the glutamyl-tRNA reductase family. Homodimer.

The catalysed reaction is (S)-4-amino-5-oxopentanoate + tRNA(Glu) + NADP(+) = L-glutamyl-tRNA(Glu) + NADPH + H(+). It functions in the pathway porphyrin-containing compound metabolism; protoporphyrin-IX biosynthesis; 5-aminolevulinate from L-glutamyl-tRNA(Glu): step 1/2. In terms of biological role, catalyzes the NADPH-dependent reduction of glutamyl-tRNA(Glu) to glutamate 1-semialdehyde (GSA). The sequence is that of Glutamyl-tRNA reductase from Oceanobacillus iheyensis (strain DSM 14371 / CIP 107618 / JCM 11309 / KCTC 3954 / HTE831).